A 230-amino-acid polypeptide reads, in one-letter code: Rab15 effector protein (230 aa).

The N-myristoyl glycine moiety is linked to residue glycine 2.

As to quaternary structure, interacts with the GTP-bound form of RAB15, RAB3A-D and RAB34.

It is found in the early endosome membrane. Its function is as follows. Effector that interacts with Rab GTPases in their active form (GTP-bound) including RAB15, RAB3A-D and RAB34. Controls downstream signaling such as cell proliferation and cell migration. Also regulates transferrin receptor recycling from the endocytic recycling compartment. The protein is Rab15 effector protein of Mus musculus (Mouse).